A 336-amino-acid polypeptide reads, in one-letter code: Glycerol-3-phosphate dehydrogenase [NAD(P)+] (336 aa).

Positions 11, 12, 32, 33, and 110 each coordinate NADPH. Sn-glycerol 3-phosphate contacts are provided by K110 and G140. Residue A144 coordinates NADPH. Sn-glycerol 3-phosphate is bound by residues K195, D248, S258, R259, and N260. The Proton acceptor role is filled by K195. R259 contacts NADPH. Residues V284 and E286 each coordinate NADPH.

It belongs to the NAD-dependent glycerol-3-phosphate dehydrogenase family.

It is found in the cytoplasm. The catalysed reaction is sn-glycerol 3-phosphate + NAD(+) = dihydroxyacetone phosphate + NADH + H(+). It carries out the reaction sn-glycerol 3-phosphate + NADP(+) = dihydroxyacetone phosphate + NADPH + H(+). It functions in the pathway membrane lipid metabolism; glycerophospholipid metabolism. Catalyzes the reduction of the glycolytic intermediate dihydroxyacetone phosphate (DHAP) to sn-glycerol 3-phosphate (G3P), the key precursor for phospholipid synthesis. In Nocardia farcinica (strain IFM 10152), this protein is Glycerol-3-phosphate dehydrogenase [NAD(P)+].